We begin with the raw amino-acid sequence, 395 residues long: S-adenosylmethionine synthase (395 aa).

Residue histidine 15 coordinates ATP. A Mg(2+)-binding site is contributed by aspartate 17. Residue glutamate 43 participates in K(+) binding. 2 residues coordinate L-methionine: glutamate 56 and glutamine 99. Residues 99–109 form a flexible loop region; the sequence is QSPEIAQGVDR. Residues 164-166, 230-231, aspartate 239, 245-246, alanine 262, and lysine 266 each bind ATP; these read DAK, RF, and RK. Aspartate 239 lines the L-methionine pocket. Lysine 270 contacts L-methionine.

This sequence belongs to the AdoMet synthase family. Homotetramer; dimer of dimers. The cofactor is Mg(2+). K(+) is required as a cofactor.

It localises to the cytoplasm. The catalysed reaction is L-methionine + ATP + H2O = S-adenosyl-L-methionine + phosphate + diphosphate. It functions in the pathway amino-acid biosynthesis; S-adenosyl-L-methionine biosynthesis; S-adenosyl-L-methionine from L-methionine: step 1/1. Catalyzes the formation of S-adenosylmethionine (AdoMet) from methionine and ATP. The overall synthetic reaction is composed of two sequential steps, AdoMet formation and the subsequent tripolyphosphate hydrolysis which occurs prior to release of AdoMet from the enzyme. This chain is S-adenosylmethionine synthase, found in Colwellia psychrerythraea (strain 34H / ATCC BAA-681) (Vibrio psychroerythus).